Here is a 138-residue protein sequence, read N- to C-terminus: Ribulose bisphosphate carboxylase small subunit (138 aa).

The protein belongs to the RuBisCO small chain family. Heterohexadecamer of 8 large and 8 small subunits.

Its subcellular location is the plastid. It localises to the chloroplast. Its function is as follows. RuBisCO catalyzes two reactions: the carboxylation of D-ribulose 1,5-bisphosphate, the primary event in carbon dioxide fixation, as well as the oxidative fragmentation of the pentose substrate in the photorespiration process. Both reactions occur simultaneously and in competition at the same active site. Although the small subunit is not catalytic it is essential for maximal activity. The sequence is that of Ribulose bisphosphate carboxylase small subunit from Pyropia yezoensis (Susabi-nori).